A 209-amino-acid polypeptide reads, in one-letter code: Small ribosomal subunit protein mS23 (209 aa).

It belongs to the mitochondrion-specific ribosomal protein mS23 family. In terms of assembly, component of the mitochondrial small ribosomal subunit.

It localises to the mitochondrion. In Sclerotinia sclerotiorum (strain ATCC 18683 / 1980 / Ss-1) (White mold), this protein is Small ribosomal subunit protein mS23 (rsm25).